A 275-amino-acid polypeptide reads, in one-letter code: Lectin DB58 (275 aa).

The N-terminal stretch at 1 to 22 is a signal peptide; it reads MASSTVSVVLSLFLLLLTQAYS. 2 N-linked (GlcNAc...) asparagine glycosylation sites follow: Asn34 and Asn101.

This sequence belongs to the leguminous lectin family. As to quaternary structure, heterodimer, composed of an alpha and a beta subunit derived from a single precursor. Leu-264 is missing in a major portion of the beta subunit, suggesting an origin by sequential removal of amino acids rather than a processing by endoproteolytic cleavage.

Functionally, metalloglycoprotein, containing Ca, Mg, Mn, and Zn and the carbohydrates galactose, glucosamine, mannose, and fucose. It agglutinates erythrocytes of blood group A1. In Vigna unguiculata subsp. cylindrica (Horse gram), this protein is Lectin DB58.